A 288-amino-acid polypeptide reads, in one-letter code: Phytanoyl-CoA dioxygenase domain-containing protein 1 homolog (288 aa).

2-oxoglutarate contacts are provided by residues Lys95, Met134, 149-151 (HVD), and Trp167. Fe cation contacts are provided by His149 and Asp151. His242 contributes to the Fe cation binding site. Residues Ser244 and Arg253 each contribute to the 2-oxoglutarate site.

Belongs to the PhyH family. PHYHD1 subfamily. Fe cation serves as cofactor.

Its function is as follows. Has alpha-ketoglutarate-dependent dioxygenase activity. Does not show detectable activity towards fatty acid CoA thioesters. Is not expected to be active with phytanoyl CoA. The polypeptide is Phytanoyl-CoA dioxygenase domain-containing protein 1 homolog (Caenorhabditis briggsae).